A 264-amino-acid chain; its full sequence is Taurine import ATP-binding protein TauB (264 aa).

Residues 4–233 enclose the ABC transporter domain; it reads LQLERISAQY…RYAAGESARA (230 aa). 38–45 is an ATP binding site; it reads GPSGSGKT.

The protein belongs to the ABC transporter superfamily. Taurine importer (TC 3.A.1.17.1) family. The complex is composed of two ATP-binding proteins (TauB), two transmembrane proteins (TauC) and a solute-binding protein (TauA).

The protein localises to the cell inner membrane. It carries out the reaction taurine(out) + ATP + H2O = taurine(in) + ADP + phosphate + H(+). Part of the ABC transporter complex TauABC involved in taurine import. Responsible for energy coupling to the transport system. The polypeptide is Taurine import ATP-binding protein TauB (Pseudomonas fluorescens (strain ATCC BAA-477 / NRRL B-23932 / Pf-5)).